Here is a 450-residue protein sequence, read N- to C-terminus: Na(+)/H(+) antiporter NhaA 2 (450 aa).

12 helical membrane-spanning segments follow: residues 43-63, 86-106, 124-144, 155-175, 185-205, 208-228, 234-254, 258-278, 299-319, 326-346, 364-384, and 398-418; these read VGGA…NSPW, LTLG…VVGL, ALPM…FVAV, GWAI…AVIS, FLLT…AVFY, EINL…ALCV, SWWL…ESGV, VAGV…AGGP, VAVP…VSGL, PITL…IFLT, WIDV…SLLI, and FVKV…AVLL.

It belongs to the NhaA Na(+)/H(+) (TC 2.A.33) antiporter family.

Its subcellular location is the cell membrane. The catalysed reaction is Na(+)(in) + 2 H(+)(out) = Na(+)(out) + 2 H(+)(in). Na(+)/H(+) antiporter that extrudes sodium in exchange for external protons. This chain is Na(+)/H(+) antiporter NhaA 2, found in Mycobacterium sp. (strain JLS).